Consider the following 475-residue polypeptide: Aspartyl/glutamyl-tRNA(Asn/Gln) amidotransferase subunit B (475 aa).

This sequence belongs to the GatB/GatE family. GatB subfamily. As to quaternary structure, heterotrimer of A, B and C subunits.

It catalyses the reaction L-glutamyl-tRNA(Gln) + L-glutamine + ATP + H2O = L-glutaminyl-tRNA(Gln) + L-glutamate + ADP + phosphate + H(+). The enzyme catalyses L-aspartyl-tRNA(Asn) + L-glutamine + ATP + H2O = L-asparaginyl-tRNA(Asn) + L-glutamate + ADP + phosphate + 2 H(+). Its function is as follows. Allows the formation of correctly charged Asn-tRNA(Asn) or Gln-tRNA(Gln) through the transamidation of misacylated Asp-tRNA(Asn) or Glu-tRNA(Gln) in organisms which lack either or both of asparaginyl-tRNA or glutaminyl-tRNA synthetases. The reaction takes place in the presence of glutamine and ATP through an activated phospho-Asp-tRNA(Asn) or phospho-Glu-tRNA(Gln). This Chlorobium limicola (strain DSM 245 / NBRC 103803 / 6330) protein is Aspartyl/glutamyl-tRNA(Asn/Gln) amidotransferase subunit B.